The following is a 520-amino-acid chain: Chaperone Ric-8B (520 aa).

Serine 468 carries the post-translational modification Phosphoserine. Threonine 473 carries the phosphothreonine modification.

Belongs to the synembryn family. As to quaternary structure, interacts with GDP-bound G(s) G-alpha proteins GNAL and GNAS. Does not interact with G-alpha proteins when they are in complex with subunits beta and gamma.

Its subcellular location is the cytoplasm. The protein resides in the cell cortex. Chaperone that specifically binds and folds nascent G(s) G-alpha proteins (GNAS and GNAL) prior to G protein heterotrimer formation, promoting their association with the plasma membrane. Also acts as a guanine nucleotide exchange factor (GEF) for G(s) proteins by stimulating exchange of bound GDP for free GTP. Acts as an important component for odorant signal transduction by mediating GNAL (G(olf)-alpha) folding, thereby promoting-dependent cAMP accumulation in olfactory sensory neurons. The chain is Chaperone Ric-8B (Ric8b) from Rattus norvegicus (Rat).